The chain runs to 505 residues: Peroxisome proliferator-activated receptor gamma (505 aa).

Thr-84 carries an O-linked (GlcNAc) threonine glycan. Ser-112 is modified (phosphoserine). The nuclear receptor DNA-binding region spans 136 to 210 (AIECRVCGDK…VGMSHNAIRF (75 aa)). 2 consecutive NR C4-type zinc fingers follow at residues 139–159 (CRVCGDKASGFHYGVHACEGC) and 176–198 (CDLNCRIHKKSRNKCQYCRFQKC). The tract at residues 205 to 280 (HNAIRFGRMP…DKSPFVIYDM (76 aa)) is interaction with FAM120B. In terms of domain architecture, NR LBD spans 238-503 (DLRALAKHLY…HPLLQEIYKD (266 aa)). Residue Lys-252 forms a Glycyl lysine isopeptide (Lys-Gly) (interchain with G-Cter in ubiquitin) linkage. Residues 314–317 (QFRS), His-351, His-477, and Tyr-501 each bind rosiglitazone. A 9aaTAD motif is present at residues 495–503 (PLLQEIYKD).

Belongs to the nuclear hormone receptor family. NR1 subfamily. In terms of assembly, interacts with FOXO1 (acetylated form). Heterodimer with other nuclear receptors, such as RXRA. The heterodimer with the retinoic acid receptor RXRA is called adipocyte-specific transcription factor ARF6. Interacts with NCOA6 coactivator, leading to a strong increase in transcription of target genes. Interacts with coactivator PPARBP, leading to a mild increase in transcription of target genes. Interacts with NOCA7 in a ligand-inducible manner. Interacts with NCOA1 and NCOA2 LXXLL motifs. Interacts with ASXL1, ASXL2, DNTTIP2, FAM120B, MAP2K1/MEK1, NR0B2, PDPK1, PRDM16, PRMT2 and TGFB1I1. Interacts (when activated by agonist) with PPP5C. Interacts with HELZ2 and THRAP3; the interaction stimulates the transcriptional activity of PPARG. Interacts with PER2, the interaction is ligand dependent and blocks PPARG recruitment to target promoters. Interacts with NOCT. Interacts with ACTN4. Interacts (when in the liganded conformation) with GPS2. Interacts with CRY1 and CRY2 in a ligand-dependent manner. In the absence of hormonal ligand, interacts with TACC1. In macrophages, interacts with PAQR3 and STUB1; the interactions promote PPARG poylubiquitination and STUB1-mediated degradation. Post-translationally, O-GlcNAcylation at Thr-84 reduces transcriptional activity in adipocytes. In terms of processing, phosphorylated in basal conditions and dephosphorylated when treated with the ligand. May be dephosphorylated by PPP5C. The phosphorylated form may be inactive and dephosphorylation at Ser-112 induces adipogenic activity. Ubiquitinated by E3 ubiquitin-protein ligase complex containing FBXO9; leading to proteasomal degradation. Ubiquitinated at Lys-252 by TRIM55 leading to proteasomal degradation. Ubiquitinated by E3 ubiquitin-protein ligase STUB1/CHIP; leading to proteasomal degradation. As to expression, highest expression in adipose tissue. Lower in skeletal muscle, spleen, heart and liver. Also detectable in placenta, lung and ovary.

The protein resides in the nucleus. It localises to the cytoplasm. Its activity is regulated as follows. PDPK1 activates its transcriptional activity independently of its kinase activity. Nuclear receptor that binds peroxisome proliferators such as hypolipidemic drugs and fatty acids. Once activated by a ligand, the nuclear receptor binds to DNA specific PPAR response elements (PPRE) and modulates the transcription of its target genes, such as acyl-CoA oxidase. It therefore controls the peroxisomal beta-oxidation pathway of fatty acids. Key regulator of adipocyte differentiation and glucose homeostasis. ARF6 acts as a key regulator of the tissue-specific adipocyte P2 (aP2) enhancer. Acts as a critical regulator of gut homeostasis by suppressing NF-kappa-B-mediated pro-inflammatory responses. Plays a role in the regulation of cardiovascular circadian rhythms by regulating the transcription of BMAL1 in the blood vessels. In terms of biological role, (Microbial infection) Upon treatment with M.tuberculosis or its lipoprotein LpqH, phosphorylation of MAPK p38 and IL-6 production are modulated, probably via this protein. This chain is Peroxisome proliferator-activated receptor gamma (PPARG), found in Homo sapiens (Human).